We begin with the raw amino-acid sequence, 2615 residues long: Polycystin-1-like protein 1 (2615 aa).

Residues 1 to 1524 (MDVDEDQHAV…VSSISEFQSH (1524 aa)) lie on the Extracellular side of the membrane. A disordered region spans residues 17–93 (IQANPELCVS…GTNSFSNPPP (77 aa)). Asn224, Asn297, Asn306, Asn390, Asn440, Asn534, and Asn619 each carry an N-linked (GlcNAc...) asparagine glycan. 2 PKD domains span residues 291–373 (SVSV…VQKR) and 375–456 (MANR…VREP). Positions 457–1349 (CQPPPVKNMG…GEEDYLHKRN (893 aa)) constitute an REJ domain. The segment at 749–815 (SSKSDLPSNL…GEPMEEYSSL (67 aa)) is disordered. The segment covering 778–789 (ALSNLGSISAES) has biased composition (polar residues). The GAIN-B domain occupies 1364–1512 (RFTGLSENSQ…SVLRRKLNAT (149 aa)). N-linked (GlcNAc...) asparagine glycosylation is present at Asn1458. A disulfide bridge connects residues Cys1468 and Cys1494. The tract at residues 1468-1512 (CVFWDKTEWRSEGPYPQPGSSPEKVNCSYHHLAPVSVLRRKLNAT) is GPS. The N-linked (GlcNAc...) asparagine glycan is linked to Asn1510. Residues 1525–1545 (PHNLLPGIFSAFLLVLYGILV) traverse the membrane as a helical segment. The Cytoplasmic segment spans residues 1546–1732 (SKSRYVDCHE…PPSRSYLHTQ (187 aa)). The PLAT domain occupies 1573–1690 (QLYAVVIDTG…LGGHVLREFF (118 aa)). Residues 1733–1753 (RLAVSFCLLCVYSCLTALVTV) form a helical membrane-spanning segment. The Extracellular segment spans residues 1754–1772 (RDHQQRPLDVGPTAITLEP). A helical transmembrane segment spans residues 1773–1793 (FCMALLCTLLACPVAQLLSLL). Residues 1794–1905 (FRCSKEARGD…ELGSQKSRVC (112 aa)) are Cytoplasmic-facing. The tract at residues 1807–1840 (STQWPLRGVKTETPQGHDSSGRPDSRQPSPHPTS) is disordered. A helical transmembrane segment spans residues 1906–1926 (LLWSSSVAWAISGSASLACGL). Residues 1927-1950 (GTGFLGYWFVPAQCMWWLYLLLLS) are Extracellular-facing. Residues 1951–1971 (LVCCAFITQPLMICLAALVFA) form a helical membrane-spanning segment. The Cytoplasmic portion of the chain corresponds to 1972–2057 (WKRKHDSKFF…ERLRRESIMQ (86 aa)). The chain crosses the membrane as a helical span at residues 2058–2078 (AALRDMTTHSIMLLLLLFIAY). Residues 2079–2288 (GRFCPGEISL…IFYSDSALKY (210 aa)) lie on the Extracellular side of the membrane. The helical transmembrane segment at 2289–2309 (LLMLSELLFLVLNVIHLCFQL) threads the bilayer. At 2310-2332 (WGMTTKGILSYWRKPRHWLELSM) the chain is on the cytoplasmic side. A helical membrane pass occupies residues 2333-2353 (VGVAIAYYAASGHLTTLAVNI). At 2354–2379 (TDQFHKGLYQRLVDIGLMVSWHQRAR) the chain is on the extracellular side. The chain crosses the membrane as a helical span at residues 2380–2400 (CLQGILLFLWMLKYVHLLSSL). The Cytoplasmic segment spans residues 2401 to 2405 (STMTP). The chain crosses the membrane as a helical span at residues 2406 to 2426 (FSAVTCFPLFRVLLVGALLLA). Residues 2427-2483 (AHYHSRWFLLFTGTLSHGTSAEAFPGLLLQFPGRSKKDSWHNCLKSDHGVMRCYYGT) are Extracellular-facing. The chain crosses the membrane as a helical span at residues 2484 to 2504 (LFLLLATLGFRMLRATFLTVF). The Cytoplasmic segment spans residues 2505-2615 (QNRKSSHRKP…VSGPLAAESE (111 aa)). A disordered region spans residues 2589 to 2615 (RAGDSPPVGSSEYQATGVSGPLAAESE).

Belongs to the polycystin family. Heterodimer. Interacts with PKD2 to form a calcium channel. Interacts with PKD2L1; to form ciliary calcium channel. May interact with GNA12, GNAS, GNAI1 and GNAI2. As to expression, in testis, strong expression in Leydig cells, low level in seminal ducts, myoid cells and tunica vaginalis. Other tissues, including adrenal gland and heart myocardium, also show low expression. In embryo, highly expressed in the node.

It is found in the cell projection. The protein localises to the cilium membrane. Component of a calcium-permeant ion channel formed by PKD1L2 and PKD1L1 in primary cilia, where it controls cilium calcium concentration, without affecting cytoplasmic calcium concentration, and regulates sonic hedgehog/SHH signaling and GLI2 transcription. The PKD1L1:PKD2L1 channel complex is mechanosensitive only at high pressures and is highly temperature sensitive. Also involved in left/right axis specification downstream of nodal flow by forming a complex with PKD2 in cilia to facilitate flow detection in left/right patterning. May function as a G-protein-coupled receptor. This is Polycystin-1-like protein 1 from Mus musculus (Mouse).